Reading from the N-terminus, the 475-residue chain is Ankyrin repeat, SAM and basic leucine zipper domain-containing protein 1 (475 aa).

Residues 1 to 25 are disordered; that stretch reads MAAGPLRGLAVAGGGESSDSEDDGW. Phosphoserine is present on residues serine 17, serine 18, and serine 20. ANK repeat units follow at residues 45–74, 78–107, 110–144, 148–177, 181–210, and 214–243; these read ERQE…SVDT, YGWT…NASF, DKQT…DPNV, RLMT…EVNT, NGYT…NKMI, and DGKT…PLEG. Residues 272–334 form the SAM domain; the sequence is SYTAFGDLEI…KIMAALKELE (63 aa).

As to quaternary structure, interacts with DDX4, PIWIL1, RANBP9 and TDRD1.

It localises to the cytoplasm. In terms of biological role, plays a central role during spermatogenesis by repressing transposable elements and preventing their mobilization, which is essential for the germline integrity. Acts via the piRNA metabolic process, which mediates the repression of transposable elements during meiosis by forming complexes composed of piRNAs and Piwi proteins and governs the methylation and subsequent repression of transposons. Its association with pi-bodies suggests a participation in the primary piRNAs metabolic process. Required prior to the pachytene stage to facilitate the production of multiple types of piRNAs, including those associated with repeats involved in the regulation of retrotransposons. May act by mediating protein-protein interactions during germ cell maturation. The polypeptide is Ankyrin repeat, SAM and basic leucine zipper domain-containing protein 1 (ASZ1) (Bos taurus (Bovine)).